The chain runs to 535 residues: Methylmalonate-semialdehyde/malonate-semialdehyde dehydrogenase [acylating], mitochondrial (535 aa).

The N-terminal 32 residues, 1 to 32 (MAAAVAAAAAVRSRILQVSSKVNSTWYPASSF), are a transit peptide targeting the mitochondrion. An N6-acetyllysine; alternate mark is found at Lys-47, Lys-52, Lys-55, and Lys-76. Residues Lys-47, Lys-52, Lys-55, and Lys-76 each carry the N6-succinyllysine; alternate modification. At Lys-87 the chain carries N6-acetyllysine. N6-acetyllysine; alternate is present on residues Lys-117 and Lys-129. 2 positions are modified to N6-succinyllysine; alternate: Lys-117 and Lys-129. Residues Ala-183, Phe-185, Lys-209, Glu-212, Arg-213, and Ser-262 each coordinate NAD(+). Ser-262 bears the Phosphoserine mark. At Lys-298 the chain carries N6-acetyllysine. Cys-317 serves as the catalytic Nucleophile. Residues Lys-330 and Lys-331 each carry the N6-acetyllysine modification. N6-acetyllysine; alternate is present on residues Lys-364 and Lys-376. N6-succinyllysine; alternate is present on residues Lys-364 and Lys-376. Phosphoserine is present on Ser-380. Position 391 is an N6-succinyllysine (Lys-391). Glu-417 is an NAD(+) binding site. Lys-500 is modified (N6-acetyllysine). Lys-517 carries the post-translational modification N6-succinyllysine.

It belongs to the aldehyde dehydrogenase family. In terms of assembly, homotetramer. In terms of tissue distribution, expressed in the head and flagellum of epididymal sperm but not in testicular sperm (at protein level). Kidney &gt; liver &gt; heart &gt; muscle &gt; brain.

The protein localises to the mitochondrion. The enzyme catalyses 3-oxopropanoate + NAD(+) + CoA + H2O = hydrogencarbonate + acetyl-CoA + NADH + H(+). It carries out the reaction 2-methyl-3-oxopropanoate + NAD(+) + CoA + H2O = propanoyl-CoA + hydrogencarbonate + NADH + H(+). It catalyses the reaction (R)-2-methyl-3-oxopropanoate + NAD(+) + CoA + H2O = propanoyl-CoA + hydrogencarbonate + NADH + H(+). The catalysed reaction is (S)-2-methyl-3-oxopropanoate + NAD(+) + CoA + H2O = propanoyl-CoA + hydrogencarbonate + NADH + H(+). Malonate and methylmalonate semialdehyde dehydrogenase involved in the catabolism of valine, thymine, and compounds catabolized by way of beta-alanine, including uracil and cytidine. The polypeptide is Methylmalonate-semialdehyde/malonate-semialdehyde dehydrogenase [acylating], mitochondrial (Rattus norvegicus (Rat)).